Consider the following 173-residue polypeptide: Lipoprotein signal peptidase (173 aa).

3 helical membrane passes run 12 to 32 (WLWLAAIMLALDQVTKYWTIQ), 67 to 87 (WQRYLFTAIAIVVSSYLVYLL), and 102 to 122 (ALILSGALGNVVDRMMFGYVI). Residues D123 and D141 contribute to the active site. The helical transmembrane segment at 137–157 (FNIADSAIFTGAVIMIFESFF) threads the bilayer.

The protein belongs to the peptidase A8 family.

Its subcellular location is the cell inner membrane. The enzyme catalyses Release of signal peptides from bacterial membrane prolipoproteins. Hydrolyzes -Xaa-Yaa-Zaa-|-(S,diacylglyceryl)Cys-, in which Xaa is hydrophobic (preferably Leu), and Yaa (Ala or Ser) and Zaa (Gly or Ala) have small, neutral side chains.. It participates in protein modification; lipoprotein biosynthesis (signal peptide cleavage). Functionally, this protein specifically catalyzes the removal of signal peptides from prolipoproteins. This Psychromonas ingrahamii (strain DSM 17664 / CCUG 51855 / 37) protein is Lipoprotein signal peptidase.